The following is a 420-amino-acid chain: D-tagatose-1,6-bisphosphate aldolase subunit GatZ (420 aa).

Belongs to the GatZ/KbaZ family. GatZ subfamily. As to quaternary structure, forms a complex with GatY.

Its pathway is carbohydrate metabolism; D-tagatose 6-phosphate degradation; D-glyceraldehyde 3-phosphate and glycerone phosphate from D-tagatose 6-phosphate: step 2/2. Functionally, component of the tagatose-1,6-bisphosphate aldolase GatYZ that is required for full activity and stability of the Y subunit. Could have a chaperone-like function for the proper and stable folding of GatY. When expressed alone, GatZ does not show any aldolase activity. Is involved in the catabolism of galactitol. This is D-tagatose-1,6-bisphosphate aldolase subunit GatZ from Shigella boydii serotype 18 (strain CDC 3083-94 / BS512).